Reading from the N-terminus, the 606-residue chain is Aspartate--tRNA(Asp/Asn) ligase (606 aa).

E177 is an L-aspartate binding site. Residues 201–204 are aspartate; the sequence is QLFK. An L-aspartate-binding site is contributed by R223. ATP is bound by residues 223–225 and Q232; that span reads RDE. L-aspartate is bound at residue H461. E499 provides a ligand contact to ATP. R506 contacts L-aspartate. 551-554 serves as a coordination point for ATP; it reads GMDR.

This sequence belongs to the class-II aminoacyl-tRNA synthetase family. Type 1 subfamily. Homodimer.

It is found in the cytoplasm. It catalyses the reaction tRNA(Asx) + L-aspartate + ATP = L-aspartyl-tRNA(Asx) + AMP + diphosphate. Its function is as follows. Aspartyl-tRNA synthetase with relaxed tRNA specificity since it is able to aspartylate not only its cognate tRNA(Asp) but also tRNA(Asn). Reaction proceeds in two steps: L-aspartate is first activated by ATP to form Asp-AMP and then transferred to the acceptor end of tRNA(Asp/Asn). This Prochlorococcus marinus (strain MIT 9303) protein is Aspartate--tRNA(Asp/Asn) ligase.